We begin with the raw amino-acid sequence, 323 residues long: Replication factor C subunit 4 (323 aa).

ATP contacts are provided by residues Val-12, Val-24, Gly-49–Thr-57, Asn-145, and Arg-203.

Belongs to the activator 1 small subunits family. Replication factor C (RFC) is a heteropentamer of subunits RFC1, RFC2, RFC3, RFC4 and RFC5 and forms a complex with POL30/PCNA in the presence of ATP. Component of the RAD24-RFC complex which consists of RAD14, RFC2, RFC3, RFC4 and RFC5 and associates with the checkpoint clamp DDC1:MEC3:RAD17 complex. Component of the ELG1-RFC complex which consists of ELG1, RFC2, RFC3, RFC4 and RFC5. Component of the CTF18-RFC complex, which consists of CTF18, CTF8, DCC1, RFC2, RFC3, RFC4 and RFC5. RFC4 interacts with ECO1.

The protein resides in the nucleus. Its function is as follows. Component of ATP-dependent clamp loader (RFC and RFC-like) complexes for DNA clamps, such as the POL30/PCNA homotrimer and the checkpoint clamp DDC1:MEC3:RAD17 complex. During a clamp loading circle, the RFC:clamp complex binds to DNA and the recognition of the double-stranded/single-stranded junction stimulates ATP hydrolysis by RFC. The complex presumably provides bipartite ATP sites in which one subunit supplies a catalytic site for hydrolysis of ATP bound to the neighboring subunit. Dissociation of RFC from the clamp leaves the clamp encircling DNA. Component of the replication factor C (RFC or activator 1) complex which loads POL30/PCNA and acts during elongation of primed DNA templates by DNA polymerase delta and epsilon. RFC has an essential but redundant activity in sister chromatid cohesion establishment. Component of the RFC-like complex CTF18-RFC which is required for efficient establishment of chromosome cohesion during S-phase and may load or unload POL30/PCNA. Component of the RFC-like RAD24-RFC complex which loads the checkpoint clamp DDC1:MEC3:RAD17 complex and is involved in DNA repair pathways. Component of the RFC-like ELG1-RFC complex which appears to have a role in DNA replication, replication fork re-start, recombination and repair. The chain is Replication factor C subunit 4 (RFC4) from Saccharomyces cerevisiae (strain ATCC 204508 / S288c) (Baker's yeast).